The chain runs to 290 residues: MIEVEIDKDSGFCFGVVTAIESAERELGNTDTLYCLGDIVHNSLEVERLEHMGLHTIDHEGLSRLRDRKVLLRAHGEPPSTYALAKRNNITIIDATCPVVLRLQRKIHKCYQETRANNTQLVIYGKKGHAEVNGLVGQTEGTAIVIEKIEDLDRLDFTRAISLFSQTTKSLDGFKAVVAEIKQRMAEGVEFNYYDTICRQVANRLPNIKAFASSHDWVYFVAGRKSSNGKMLFEECRKANPNTLFISEVSEITEPLPEGVRRVGVCGATSTPKWLMEEVAVRIKELNASE.

A [4Fe-4S] cluster-binding site is contributed by Cys13. His41 and His75 together coordinate (2E)-4-hydroxy-3-methylbut-2-enyl diphosphate. Dimethylallyl diphosphate-binding residues include His41 and His75. Residues His41 and His75 each contribute to the isopentenyl diphosphate site. Residue Cys97 coordinates [4Fe-4S] cluster. His129 serves as a coordination point for (2E)-4-hydroxy-3-methylbut-2-enyl diphosphate. A dimethylallyl diphosphate-binding site is contributed by His129. Isopentenyl diphosphate is bound at residue His129. Glu131 functions as the Proton donor in the catalytic mechanism. Residue Thr167 coordinates (2E)-4-hydroxy-3-methylbut-2-enyl diphosphate. Cys198 serves as a coordination point for [4Fe-4S] cluster. Positions 226, 227, 228, and 270 each coordinate (2E)-4-hydroxy-3-methylbut-2-enyl diphosphate. Dimethylallyl diphosphate is bound by residues Ser226, Ser227, Asn228, and Ser270. The isopentenyl diphosphate site is built by Ser226, Ser227, Asn228, and Ser270.

The protein belongs to the IspH family. Requires [4Fe-4S] cluster as cofactor.

The catalysed reaction is isopentenyl diphosphate + 2 oxidized [2Fe-2S]-[ferredoxin] + H2O = (2E)-4-hydroxy-3-methylbut-2-enyl diphosphate + 2 reduced [2Fe-2S]-[ferredoxin] + 2 H(+). The enzyme catalyses dimethylallyl diphosphate + 2 oxidized [2Fe-2S]-[ferredoxin] + H2O = (2E)-4-hydroxy-3-methylbut-2-enyl diphosphate + 2 reduced [2Fe-2S]-[ferredoxin] + 2 H(+). The protein operates within isoprenoid biosynthesis; dimethylallyl diphosphate biosynthesis; dimethylallyl diphosphate from (2E)-4-hydroxy-3-methylbutenyl diphosphate: step 1/1. Its pathway is isoprenoid biosynthesis; isopentenyl diphosphate biosynthesis via DXP pathway; isopentenyl diphosphate from 1-deoxy-D-xylulose 5-phosphate: step 6/6. Its function is as follows. Catalyzes the conversion of 1-hydroxy-2-methyl-2-(E)-butenyl 4-diphosphate (HMBPP) into a mixture of isopentenyl diphosphate (IPP) and dimethylallyl diphosphate (DMAPP). Acts in the terminal step of the DOXP/MEP pathway for isoprenoid precursor biosynthesis. This chain is 4-hydroxy-3-methylbut-2-enyl diphosphate reductase, found in Parabacteroides distasonis (strain ATCC 8503 / DSM 20701 / CIP 104284 / JCM 5825 / NCTC 11152).